The following is a 156-amino-acid chain: Oxidized purine nucleoside triphosphate hydrolase (156 aa).

One can recognise a Nudix hydrolase domain in the interval 3–132 (TSRLYTLVLV…WFPLLLQKKK (130 aa)). Thr8 contributes to the 2-oxo-dATP binding site. Residues Thr8, Lys23, Asn33, 35-38 (FGGK), and Glu52 contribute to the 8-oxo-dGTP site. 2-oxo-dATP-binding positions include Asn33 and 35–38 (FGGK). Mg(2+) is bound by residues Gly36, Glu52, Glu55, Glu56, and Glu100. A Nudix box motif is present at residues 37-58 (GKVQEGETIEDGAKRELLEESG). 8-oxo-dGTP-binding positions include Glu56, Glu100, and 117-120 (WPDD). 117–120 (WPDD) is a 2-oxo-dATP binding site.

It belongs to the Nudix hydrolase family. As to quaternary structure, monomer. Mg(2+) serves as cofactor. In terms of tissue distribution, high expression levels detected in thymus, liver, spleen, kidney, testis and large intestine, with lower levels detected in brain, heart, lung and stomach (at protein level). Expressed in kidney, liver and small intestine.

The protein localises to the cytoplasm. Its subcellular location is the nucleus. It is found in the nucleus membrane. It localises to the cytoplasmic vesicle. The protein resides in the secretory vesicle. The protein localises to the acrosome. It catalyses the reaction 2-oxo-dATP + H2O = 2-oxo-dAMP + diphosphate + H(+). The catalysed reaction is 2-oxo-ATP + H2O = 2-oxo-AMP + diphosphate + H(+). It carries out the reaction 8-oxo-dGTP + H2O = 8-oxo-dGMP + diphosphate + H(+). The enzyme catalyses 8-oxo-dATP + H2O = 8-oxo-dAMP + diphosphate + H(+). It catalyses the reaction O(6)-methyl-dGTP + H2O = O(6)-methyl-dGMP + diphosphate + H(+). The catalysed reaction is N(6)-methyl-dATP + H2O = N(6)-methyl-dAMP + diphosphate + H(+). It carries out the reaction N(6)-methyl-ATP + H2O = N(6)-methyl-AMP + diphosphate + H(+). Its function is as follows. Oxidized purine nucleoside triphosphate hydrolase which is a prominent sanitizer of the oxidized nucleotide pool. Catalyzes the hydrolysis of 2-oxo-dATP (2-hydroxy-dATP) into 2-oxo-dAMP. Also has a significant hydrolase activity toward 2-oxo-ATP, 8-oxo-dGTP and 8-oxo-dATP. Through the hydrolysis of oxidized purine nucleoside triphosphates, prevents their incorporation into DNA and the subsequent transversions A:T to C:G and G:C to T:A. Also catalyzes the hydrolysis of methylated purine nucleoside triphosphate preventing their integration into DNA. Through this antimutagenic activity protects cells from oxidative stress. This chain is Oxidized purine nucleoside triphosphate hydrolase (Nudt1), found in Mus musculus (Mouse).